Reading from the N-terminus, the 352-residue chain is C-C chemokine receptor type 5 (352 aa).

At 1-30 (MDYQVSSPIYDIDYGPSEPCRKIDVKQMGA) the chain is on the extracellular side. Y3 bears the Sulfotyrosine mark. S6 and S7 each carry an O-linked (GalNAc...) serine glycan. Y10 and Y14 each carry sulfotyrosine. 2 cysteine pairs are disulfide-bonded: C20/C269 and C101/C178. A helical membrane pass occupies residues 31 to 58 (QLLPPLYSLVFLFGFVGNMLVVLILINC). Topologically, residues 59-68 (KRLKSMTDIY) are cytoplasmic. A helical membrane pass occupies residues 69-89 (LLNLAISDLLFLFTIPFWAHY). At 90–102 (AAGQWDFGNTMCQ) the chain is on the extracellular side. Residues 103 to 124 (FLTALYFIGFFSGIFFIILLTI) traverse the membrane as a helical segment. Over 125 to 141 (DRYLAIVHAVFALKART) the chain is Cytoplasmic. Residues 142–166 (VTFGVVTSVITWVVAVFASLPGIIF) traverse the membrane as a helical segment. Over 167–198 (TRSQKEGYHYSCSPHFPFSQYRFWKNFETLKM) the chain is Extracellular. The helical transmembrane segment at 199-218 (VILGLVLPLLVMVICYSGIL) threads the bilayer. Topologically, residues 219-235 (KTLLRCRNEKKRHRAVR) are cytoplasmic. A helical membrane pass occupies residues 236 to 260 (LIFTIMIVYFLFWAPYNIVLLINTY). Residues 261 to 277 (PDFFGVNNCNSSNRLDQ) are Extracellular-facing. A helical membrane pass occupies residues 278-301 (AMQVTETLGMTHCCVNPIIYAFVG). Residues 302-352 (EKFRNYLVIFFQKHIAKRFCKCCSIFQKEAPERANSVYTRSTGEQEISVGL) lie on the Cytoplasmic side of the membrane. 3 S-palmitoyl cysteine lipidation sites follow: C321, C323, and C324. Phosphoserine; by BARK1 occurs at positions 337, 342, and 349.

Belongs to the G-protein coupled receptor 1 family. In terms of assembly, interacts with PRAF2. Efficient ligand binding to CCL3/MIP-1alpha and CCL4/MIP-1beta requires sulfation, O-glycosylation and sialic acid modifications. Glycosylation on Ser-6 is required for efficient binding of CCL4. Interacts with GRK2. Interacts with ARRB1 and ARRB2. Interacts with CNIH4. Interacts with S100A4; this interaction stimulates T-lymphocyte chemotaxis. Post-translationally, sulfated on at least 2 of the N-terminal tyrosines. Sulfation is required for efficient binding of the chemokines, CCL3 and CCL4. Palmitoylation in the C-terminal is important for cell surface expression. In terms of processing, phosphorylation on serine residues in the C-terminal is stimulated by binding CC chemokines especially by APO-RANTES. Post-translationally, O-glycosylated, but not N-glycosylated. Ser-6 appears to be the major site even if Ser-7 may be also O-glycosylated. Also sialylated glycans present which contribute to chemokine binding. Ser-17 may also be glycosylated and, if so, with small moieties such as a T-antigen.

Its subcellular location is the cell membrane. Its function is as follows. Receptor for a number of inflammatory CC-chemokines including CCL3/MIP-1-alpha, CCL4/MIP-1-beta and RANTES and subsequently transduces a signal by increasing the intracellular calcium ion level. May play a role in the control of granulocytic lineage proliferation or differentiation. Participates in T-lymphocyte migration to the infection site by acting as a chemotactic receptor. The protein is C-C chemokine receptor type 5 (CCR5) of Saimiri sciureus (Common squirrel monkey).